A 465-amino-acid chain; its full sequence is Iron transporter FTH1 (465 aa).

At 1 to 11 (MAFEDYFSFQI) the chain is on the vacuolar side. A helical transmembrane segment spans residues 12–32 (FFIFLRESLEIVVIVSILLTI). Topologically, residues 33–135 (VKQGLSVEDD…LYQKLKIQIL (103 aa)) are cytoplasmic. The tract at residues 44-66 (PFEGSSSSAGLPSPNTNTNADST) is disordered. Over residues 46-66 (EGSSSSAGLPSPNTNTNADST) the composition is skewed to polar residues. The chain crosses the membrane as a helical span at residues 136 to 156 (AGGAFGLLLCMLIGGAFVSIF). At 157 to 170 (YHIGTDLWTLSEHY) the chain is on the vacuolar side. A helical transmembrane segment spans residues 171–191 (YEGVLSLVASVIISVMGLFFL). The Cytoplasmic portion of the chain corresponds to 192–289 (RMGKLREKFR…FFFRYSSSLS (98 aa)). Residues 290 to 310 (LKICLVVATCFLYLIAAGLFS) traverse the membrane as a helical segment. Over 311–358 (KGVWQLELQDYVNKCNGQDMSEVGNGPGSYDISRSVWHVNCCNGEKDG) the chain is Vacuolar. A helical membrane pass occupies residues 359-379 (GWMIFTAIFGWTNSATVGSVI). Over 380–465 (SYNAYWLVLI…LIIDSSGSAN (86 aa)) the chain is Cytoplasmic. The interval 433 to 465 (TSELNSSTSEPDSQRRSKDSSVPLIIDSSGSAN) is disordered. Phosphoserine occurs at positions 449 and 453.

This sequence belongs to the oxidase-dependent Fe transporter (OFeT) (TC 9.A.10.1) family. In terms of assembly, interacts with FET5.

The protein localises to the vacuole membrane. In terms of biological role, high affinity iron transporter probably involved in transport of intravacuolar stores of iron. This Saccharomyces cerevisiae (strain ATCC 204508 / S288c) (Baker's yeast) protein is Iron transporter FTH1 (FTH1).